Here is a 646-residue protein sequence, read N- to C-terminus: Anoctamin-10 (646 aa).

8 helical membrane-spanning segments follow: residues 210–230 (LYFGFLEYFTFALIPMALIGI), 241–261 (DKYVLFAVFNLVWSTVFLEVW), 314–334 (IYLVSVPFVLLCLYLSFYVMM), 357–377 (VLLFVPSIIYAVVIEIMNLLY), 404–424 (VLVFNFVNCFASLFYIAFVMQ), 502–522 (FLLFGYVSLFSCVHPLAAVLV), 557–577 (LAFETMSIIAVVTNCALIALS), and 592–612 (ILTVVAIEHVLLAFKFILAFV).

It belongs to the anoctamin family.

Its subcellular location is the membrane. Functionally, does not exhibit calcium-activated chloride channel (CaCC) activity. Can inhibit the activity of ANO1. The protein is Anoctamin-10 (ano10) of Danio rerio (Zebrafish).